Reading from the N-terminus, the 229-residue chain is Dephospho-CoA kinase (229 aa).

In terms of domain architecture, DPCK spans 3–203 (TVGLTGGIGS…ARRDAKATAK (201 aa)). 11–16 (GSGKSA) lines the ATP pocket. Residues 203–229 (KATAKAETVASGTDTAASGTDTAAPAG) form a disordered region.

The protein belongs to the CoaE family.

It localises to the cytoplasm. It carries out the reaction 3'-dephospho-CoA + ATP = ADP + CoA + H(+). It participates in cofactor biosynthesis; coenzyme A biosynthesis; CoA from (R)-pantothenate: step 5/5. In terms of biological role, catalyzes the phosphorylation of the 3'-hydroxyl group of dephosphocoenzyme A to form coenzyme A. This chain is Dephospho-CoA kinase, found in Frankia casuarinae (strain DSM 45818 / CECT 9043 / HFP020203 / CcI3).